The primary structure comprises 217 residues: Cytochrome c biogenesis ATP-binding export protein CcmA (217 aa).

The 199-residue stretch at 16–214 (LVLEQLSCER…AHGQAEVTEG (199 aa)) folds into the ABC transporter domain. 48–55 (GANGAGKT) contacts ATP.

It belongs to the ABC transporter superfamily. CcmA exporter (TC 3.A.1.107) family. In terms of assembly, the complex is composed of two ATP-binding proteins (CcmA) and two transmembrane proteins (CcmB).

Its subcellular location is the cell inner membrane. The enzyme catalyses heme b(in) + ATP + H2O = heme b(out) + ADP + phosphate + H(+). In terms of biological role, part of the ABC transporter complex CcmAB involved in the biogenesis of c-type cytochromes; once thought to export heme, this seems not to be the case, but its exact role is uncertain. Responsible for energy coupling to the transport system. In Alcanivorax borkumensis (strain ATCC 700651 / DSM 11573 / NCIMB 13689 / SK2), this protein is Cytochrome c biogenesis ATP-binding export protein CcmA.